Consider the following 457-residue polypeptide: Siroheme synthase (457 aa).

A precorrin-2 dehydrogenase /sirohydrochlorin ferrochelatase region spans residues 1-204 (MDHLPIFCQL…NDQKAITETT (204 aa)). Residues 22 to 23 (DV) and 43 to 44 (LA) contribute to the NAD(+) site. S128 carries the phosphoserine modification. The segment at 216–457 (GEVVLVGAGP…RDKLNWFSNH (242 aa)) is uroporphyrinogen-III C-methyltransferase. Residue P225 participates in S-adenosyl-L-methionine binding. Residue D248 is the Proton acceptor of the active site. The active-site Proton donor is the K270. Residues 301-303 (GGD), I306, 331-332 (TA), M382, and G411 contribute to the S-adenosyl-L-methionine site.

In the N-terminal section; belongs to the precorrin-2 dehydrogenase / sirohydrochlorin ferrochelatase family. This sequence in the C-terminal section; belongs to the precorrin methyltransferase family.

The enzyme catalyses uroporphyrinogen III + 2 S-adenosyl-L-methionine = precorrin-2 + 2 S-adenosyl-L-homocysteine + H(+). It catalyses the reaction precorrin-2 + NAD(+) = sirohydrochlorin + NADH + 2 H(+). It carries out the reaction siroheme + 2 H(+) = sirohydrochlorin + Fe(2+). It functions in the pathway cofactor biosynthesis; adenosylcobalamin biosynthesis; precorrin-2 from uroporphyrinogen III: step 1/1. Its pathway is cofactor biosynthesis; adenosylcobalamin biosynthesis; sirohydrochlorin from precorrin-2: step 1/1. It participates in porphyrin-containing compound metabolism; siroheme biosynthesis; precorrin-2 from uroporphyrinogen III: step 1/1. The protein operates within porphyrin-containing compound metabolism; siroheme biosynthesis; siroheme from sirohydrochlorin: step 1/1. It functions in the pathway porphyrin-containing compound metabolism; siroheme biosynthesis; sirohydrochlorin from precorrin-2: step 1/1. Multifunctional enzyme that catalyzes the SAM-dependent methylations of uroporphyrinogen III at position C-2 and C-7 to form precorrin-2 via precorrin-1. Then it catalyzes the NAD-dependent ring dehydrogenation of precorrin-2 to yield sirohydrochlorin. Finally, it catalyzes the ferrochelation of sirohydrochlorin to yield siroheme. This chain is Siroheme synthase, found in Shigella dysenteriae serotype 1 (strain Sd197).